Reading from the N-terminus, the 302-residue chain is ATP synthase gamma chain (302 aa).

This sequence belongs to the ATPase gamma chain family. In terms of assembly, F-type ATPases have 2 components, CF(1) - the catalytic core - and CF(0) - the membrane proton channel. CF(1) has five subunits: alpha(3), beta(3), gamma(1), delta(1), epsilon(1). CF(0) has three main subunits: a, b and c.

Its subcellular location is the cell inner membrane. In terms of biological role, produces ATP from ADP in the presence of a proton gradient across the membrane. The gamma chain is believed to be important in regulating ATPase activity and the flow of protons through the CF(0) complex. The protein is ATP synthase gamma chain of Bartonella bacilliformis (strain ATCC 35685 / KC583 / Herrer 020/F12,63).